Reading from the N-terminus, the 169-residue chain is Endoribonuclease YbeY (169 aa).

The segment at 72–95 is disordered; sequence GPVAAPRQEPDSPPACRKDSSHAE. Residues H131, H135, and H141 each contribute to the Zn(2+) site.

Belongs to the endoribonuclease YbeY family. It depends on Zn(2+) as a cofactor.

The protein resides in the cytoplasm. Single strand-specific metallo-endoribonuclease involved in late-stage 70S ribosome quality control and in maturation of the 3' terminus of the 16S rRNA. In Oleidesulfovibrio alaskensis (strain ATCC BAA-1058 / DSM 17464 / G20) (Desulfovibrio alaskensis), this protein is Endoribonuclease YbeY.